The following is a 118-amino-acid chain: Basic leucine zipper transcriptional factor ATF-like 3 (118 aa).

Residues M1 to V69 form a disordered region. S2 and S24 each carry phosphoserine. The region spanning D28–H91 is the bZIP domain. The tract at residues R30–K55 is basic motif. Over residues Q51–V69 the composition is skewed to basic and acidic residues. Positions L56–L84 are leucine-zipper.

This sequence belongs to the bZIP family. In terms of assembly, heterodimer; heterodimerizes with JUN family proteins. Interacts with JUN. As to expression, highly expressed in CD8-alpha(+) classical dendritic cells (cDCs), with low to absent expression in other immune cells and non-immune tissues.

The protein resides in the nucleus. Functionally, AP-1 family transcription factor that controls the differentiation of CD8(+) thymic conventional dendritic cells in the immune system. Acts via the formation of a heterodimer with JUN family proteins that recognizes and binds DNA sequence 5'-TGA[CG]TCA-3' and regulates expression of target genes. Required for development of CD8-alpha(+) classical dendritic cells (cDCs) and related CD103(+) dendritic cells that cross-present antigens to CD8 T-cells and produce interleukin-12 (IL12) in response to pathogens. This Mus musculus (Mouse) protein is Basic leucine zipper transcriptional factor ATF-like 3 (Batf3).